The sequence spans 231 residues: UPF0749 protein YlxW (231 aa).

An N-terminal signal peptide occupies residues 1–34 (MRGKSAVLLSLIMLIAGFLISFSFQMTKENNKSA). Positions 44 to 94 (YALRDELLKQEKENKKFEKELYQKQNKVRQAENKLKKEKSEYYNVLEDTEK) form a coiled coil.

It belongs to the UPF0749 family.

In terms of biological role, may be involved in cell division and sporulation. In Bacillus subtilis (strain 168), this protein is UPF0749 protein YlxW (ylxW).